A 304-amino-acid chain; its full sequence is Probable 5-dehydro-4-deoxyglucarate dehydratase (304 aa).

This sequence belongs to the DapA family.

It carries out the reaction 5-dehydro-4-deoxy-D-glucarate + H(+) = 2,5-dioxopentanoate + CO2 + H2O. It participates in carbohydrate acid metabolism; D-glucarate degradation; 2,5-dioxopentanoate from D-glucarate: step 2/2. This chain is Probable 5-dehydro-4-deoxyglucarate dehydratase, found in Pseudarthrobacter chlorophenolicus (strain ATCC 700700 / DSM 12829 / CIP 107037 / JCM 12360 / KCTC 9906 / NCIMB 13794 / A6) (Arthrobacter chlorophenolicus).